Consider the following 428-residue polypeptide: tRNA modification GTPase MnmE (428 aa).

The (6S)-5-formyl-5,6,7,8-tetrahydrofolate site is built by R20, E77, and K117. The region spanning 213-351 (GFEVAIVGSP…LVSRISDTLR (139 aa)) is the TrmE-type G domain. GTP is bound by residues 223–228 (NVGKST), 242–248 (SEYAGTT), and 267–270 (DTAG). Mg(2+)-binding residues include S227 and T248. K428 lines the (6S)-5-formyl-5,6,7,8-tetrahydrofolate pocket.

This sequence belongs to the TRAFAC class TrmE-Era-EngA-EngB-Septin-like GTPase superfamily. TrmE GTPase family. Homodimer. Heterotetramer of two MnmE and two MnmG subunits. It depends on K(+) as a cofactor.

It localises to the cytoplasm. Exhibits a very high intrinsic GTPase hydrolysis rate. Involved in the addition of a carboxymethylaminomethyl (cmnm) group at the wobble position (U34) of certain tRNAs, forming tRNA-cmnm(5)s(2)U34. The sequence is that of tRNA modification GTPase MnmE from Ruegeria sp. (strain TM1040) (Silicibacter sp.).